Here is a 544-residue protein sequence, read N- to C-terminus: Chaperonin GroEL (544 aa).

ATP-binding positions include 30–33, Lys-51, 87–91, Gly-415, 479–481, and Asp-495; these read TLGP, DGTTT, and NAA.

Belongs to the chaperonin (HSP60) family. As to quaternary structure, forms a cylinder of 14 subunits composed of two heptameric rings stacked back-to-back. Interacts with the co-chaperonin GroES.

It is found in the cytoplasm. The catalysed reaction is ATP + H2O + a folded polypeptide = ADP + phosphate + an unfolded polypeptide.. Functionally, together with its co-chaperonin GroES, plays an essential role in assisting protein folding. The GroEL-GroES system forms a nano-cage that allows encapsulation of the non-native substrate proteins and provides a physical environment optimized to promote and accelerate protein folding. The protein is Chaperonin GroEL of Acinetobacter baumannii (strain AB307-0294).